The sequence spans 148 residues: Fluoride-specific ion channel FluC 2 (148 aa).

The next 4 membrane-spanning stretches (helical) occupy residues 23 to 43 (LGHL…RLAV), 61 to 81 (GTLA…TLIF), 92 to 112 (FWVL…LHTL), and 120 to 140 (LLGG…ALAG). Na(+)-binding residues include G99 and T102.

Belongs to the fluoride channel Fluc/FEX (TC 1.A.43) family.

The protein resides in the cell membrane. The enzyme catalyses fluoride(in) = fluoride(out). Na(+) is not transported, but it plays an essential structural role and its presence is essential for fluoride channel function. Fluoride-specific ion channel. Important for reducing fluoride concentration in the cell, thus reducing its toxicity. This Rubrobacter xylanophilus (strain DSM 9941 / JCM 11954 / NBRC 16129 / PRD-1) protein is Fluoride-specific ion channel FluC 2.